We begin with the raw amino-acid sequence, 89 residues long: Small ribosomal subunit protein uS15 (89 aa).

Belongs to the universal ribosomal protein uS15 family. In terms of assembly, part of the 30S ribosomal subunit. Forms a bridge to the 50S subunit in the 70S ribosome, contacting the 23S rRNA.

In terms of biological role, one of the primary rRNA binding proteins, it binds directly to 16S rRNA where it helps nucleate assembly of the platform of the 30S subunit by binding and bridging several RNA helices of the 16S rRNA. Its function is as follows. Forms an intersubunit bridge (bridge B4) with the 23S rRNA of the 50S subunit in the ribosome. In Trichodesmium erythraeum (strain IMS101), this protein is Small ribosomal subunit protein uS15.